The sequence spans 151 residues: Ribosome maturation factor RimP (151 aa).

It belongs to the RimP family.

Its subcellular location is the cytoplasm. Functionally, required for maturation of 30S ribosomal subunits. The polypeptide is Ribosome maturation factor RimP (Vibrio parahaemolyticus serotype O3:K6 (strain RIMD 2210633)).